The following is a 508-amino-acid chain: N-acetyl-D-hexosamine oxidase (508 aa).

Positions 26–203 (TDAQAAGRIA…TAYTFARLPE (178 aa)) constitute an FAD-binding PCMH-type domain. A cross-link (6-(S-cysteinyl)-8alpha-(pros-histidyl)-FAD (His-Cys)) is located at residues 64–123 (HCYEDFVSNNPDGAIVDLSLLNAPEVRADGTVRIPAGTQNWNGYLELYKRHNLTLPGGSC).

The protein belongs to the oxygen-dependent FAD-linked oxidoreductase family. FAD serves as cofactor.

It carries out the reaction N-acetyl-D-glucosamine + O2 + H2O = N-acetyl-D-glucosaminate + H2O2 + H(+). The catalysed reaction is N-acetyl-D-galactosamine + O2 + H2O = N-acetyl-D-galactosaminate + H2O2 + H(+). It catalyses the reaction N-acetyl-D-glucosamine + O2 = N-acetyl-D-glucosamino-1,5-lactone + H2O2. The enzyme catalyses N-acetyl-D-galactosamine + O2 = N-acetyl-D-galactosamino-1,5-lactone + H2O2. Its function is as follows. Catalyzes the oxidation of a range of monosaccharides in vitro, displaying the highest activity with N-acetylglucosamine (GlcNAc) and N-acetylgalactosamine (GalNAc), with a reduction of O2 to H2O2. Acts upon the C1 carbon of the GlcNAc or GalNAc molecule, producing the corresponding lactone, which can spontaneously hydrolyze. Its biological function is unclear, but its main function might be connected to extracellular production of hydrogen peroxide to compete with other organisms through oxidative stress, or support the action of peroxidases and peroxygenases. The protein is N-acetyl-D-hexosamine oxidase of Ralstonia solanacearum (strain UW551).